Here is a 464-residue protein sequence, read N- to C-terminus: Leucine-rich repeat-containing protein 34 (464 aa).

The segment at 1 to 48 (MAAQPPRPVGERSMGSSREAARAPARSPAWASTQASTPGAALAVQRES) is disordered. Low complexity predominate over residues 16–32 (SSREAARAPARSPAWAS). 2 LRR repeats span residues 295–315 (SLRY…VYLA) and 323–345 (TLEV…LSET).

Interacts with NPM1 and NCL.

Its subcellular location is the nucleus. It localises to the nucleolus. The protein resides in the cytoplasm. Functionally, highly expressed in stem cells where it may be involved in regulation of pluripotency. In embryonic stem cells (ESCs), important for normal expression of the pluripotency regulators POU5F1/OCT4 and KLF4. Also important for expression of the ectodermal marker gene NES and the endodermal marker gene GATA4. Promotes stem cell proliferation in vitro. This chain is Leucine-rich repeat-containing protein 34 (LRRC34), found in Homo sapiens (Human).